Consider the following 878-residue polypeptide: Interleukin-3 receptor class 2 subunit beta (878 aa).

An N-terminal signal peptide occupies residues 1–22 (MDQQMALTWGLCYMALVALCWG). The Extracellular segment spans residues 23–440 (HEVTEEEETV…SNEYTWTTDW (418 aa)). C39 and C49 are disulfide-bonded. N-linked (GlcNAc...) asparagine glycosylation is present at N62. C78 and C95 are joined by a disulfide. Residues 139-244 (PPKDIHISPS…PEVHWDSQPG (106 aa)) form the Fibronectin type-III 1 domain. The segment at 223–244 (GSSLSGRPSRWSPEVHWDSQPG) is disordered. Intrachain disulfides connect C254–C264 and C293–C310. One can recognise a Fibronectin type-III 2 domain in the interval 343–438 (QMEPPILNQT…EWSNEYTWTT (96 aa)). N350 is a glycosylation site (N-linked (GlcNAc...) asparagine). The WSXWS motif motif lies at 427-431 (WSEWS). A helical membrane pass occupies residues 441-462 (VMPTLWIVLILVFLIFTLLLAL). Residues 463 to 878 (HFGRVYGYRT…AIQFFKSLKY (416 aa)) lie on the Cytoplasmic side of the membrane. The Box 1 motif motif lies at 476 to 484 (WKEKIPNPS). 2 disordered regions span residues 539 to 620 (LTIE…GGSL) and 660 to 709 (SSLE…MASD). Positions 554–570 (PDTTPAASSESTEQLPN) are enriched in polar residues. The span at 671–689 (EPKENPPVELSVEKQEARD) shows a compositional bias: basic and acidic residues. Phosphoserine is present on residues S752 and S754. Y765 bears the Phosphotyrosine mark. Disordered stretches follow at residues 771–810 (SVSQ…PHPE) and 829–849 (PGSL…ETED).

Belongs to the type I cytokine receptor family. Type 4 subfamily. Heterodimer of an alpha and a beta subunit.

The protein resides in the membrane. Its function is as follows. In mouse, there are two classes of high-affinity IL3 receptors. One contains this IL3-specific beta subunit and the other contains the beta subunit also shared by high-affinity IL5 and GM-CSF receptors. This is Interleukin-3 receptor class 2 subunit beta (Csf2rb2) from Mus musculus (Mouse).